We begin with the raw amino-acid sequence, 229 residues long: Thiamine import ATP-binding protein ThiQ (229 aa).

Residues 2–229 (LHLENIRVRQ…NNAEPLRPWM (228 aa)) enclose the ABC transporter domain. Residue 32-39 (GASGSGKS) coordinates ATP.

It belongs to the ABC transporter superfamily. Thiamine importer (TC 3.A.1.19.1) family. In terms of assembly, the complex is composed of two ATP-binding proteins (ThiQ), two transmembrane proteins (ThiP) and a solute-binding protein (ThiB).

It localises to the cell inner membrane. It catalyses the reaction thiamine(out) + ATP + H2O = thiamine(in) + ADP + phosphate + H(+). In terms of biological role, part of the ABC transporter complex ThiBPQ involved in thiamine import. Responsible for energy coupling to the transport system. This chain is Thiamine import ATP-binding protein ThiQ, found in Jannaschia sp. (strain CCS1).